The chain runs to 975 residues: Macrophage colony-stimulating factor 1 receptor 1 (975 aa).

The signal sequence occupies residues 1–17 (MQSFLPLLMGIMASASS). Topologically, residues 18 to 519 (VEWRHPVIWF…VEVSDKLFTS (502 aa)) are extracellular. Ig-like C2-type domains are found at residues 34–113 (SSEV…VYVK), 125–208 (SLRV…INVI), 221–310 (MDEY…LLVV), 329–407 (GLSV…FHVK), and 404–513 (FHVK…VEVS). Disulfide bonds link cysteine 49/cysteine 93, cysteine 140/cysteine 189, and cysteine 236/cysteine 292. Residues asparagine 156, asparagine 165, asparagine 246, asparagine 250, asparagine 289, asparagine 301, asparagine 399, asparagine 420, and asparagine 451 are each glycosylated (N-linked (GlcNAc...) asparagine). A disulfide bridge links cysteine 426 with cysteine 495. A helical transmembrane segment spans residues 520–540 (TLIGAAGVLAIFLLLLVFLLY). Over 541–975 (KYKQKPRFEI…LMKTNNYQFC (435 aa)) the chain is Cytoplasmic. Positions 544–576 (QKPRFEIRWKIIEAREGNNYTFIDPTQLPYNEK) are regulatory juxtamembrane domain. A Phosphotyrosine; by autocatalysis modification is found at tyrosine 563. Residues 584–918 (LKLGKVLGAG…MISQMINRLL (335 aa)) enclose the Protein kinase domain. ATP is bound by residues 590–598 (LGAGAFGKV) and lysine 619. Phosphotyrosine; by autocatalysis is present on residues tyrosine 702 and tyrosine 726. Aspartate 782 acts as the Proton acceptor in catalysis. Positions 800 to 822 (DFGLARDIMNDSNYVVKGNARLP) are activation loop. Tyrosine 813 and tyrosine 929 each carry phosphotyrosine; by autocatalysis. Residues 939-963 (EGEACDEPKRYDPPCERSCDHEEEE) form a disordered region. Residues 944 to 958 (DEPKRYDPPCERSCD) show a composition bias toward basic and acidic residues. Phosphotyrosine; by autocatalysis is present on tyrosine 972.

It belongs to the protein kinase superfamily. Tyr protein kinase family. CSF-1/PDGF receptor subfamily. In terms of assembly, monomer. Homodimer. Interacts with CSF1. Post-translationally, autophosphorylated in response to CSF1 binding. autophosphorylation, leading to its degradation. Ubiquitinated. Becomes rapidly polyubiquitinated after autophosphorylation, leading to its degradation.

It is found in the cell membrane. The catalysed reaction is L-tyrosyl-[protein] + ATP = O-phospho-L-tyrosyl-[protein] + ADP + H(+). Present in an inactive conformation in the absence of bound ligand. CSF1 binding leads to dimerization and activation by autophosphorylation on tyrosine residues. In terms of biological role, tyrosine-protein kinase that acts as a cell-surface receptor for CSF1 and plays an essential role in the regulation of survival, proliferation and differentiation of hematopoietic precursor cells, especially mononuclear phagocytes, such as macrophages and monocytes. Plays an important role in innate immunity and in inflammatory processes. Plays an important role in the regulation of osteoclast proliferation and differentiation, the regulation of bone resorption, and is required for normal bone development. Promotes reorganization of the actin cytoskeleton, regulates formation of membrane ruffles, cell adhesion and cell migration. Activates several signaling pathways in response to ligand binding. The chain is Macrophage colony-stimulating factor 1 receptor 1 (csf1r1) from Takifugu rubripes (Japanese pufferfish).